The chain runs to 345 residues: Alkaline phosphatase isozyme conversion protein (345 aa).

The signal sequence occupies residues 1 to 24 (MFSALRHRTAALALGVCFILPVHA). Zn(2+) contacts are provided by His-117, Asp-143, Glu-176, and Asp-204.

The protein belongs to the peptidase M28 family. M28C subfamily.

This protein, presumably an aminopeptidase, mediates the conversion of E.coli alkaline phosphatase isozyme 1, to isozymes 2 and 3 by removing, one by one, the two N-terminal arginine residues. In Escherichia coli (strain K12), this protein is Alkaline phosphatase isozyme conversion protein (iap).